The following is a 450-amino-acid chain: Phosphoglucosamine mutase (450 aa).

Residue Ser-102 is the Phosphoserine intermediate of the active site. Positions 102, 243, 245, and 247 each coordinate Mg(2+). Position 102 is a phosphoserine (Ser-102).

Belongs to the phosphohexose mutase family. Requires Mg(2+) as cofactor. Activated by phosphorylation.

The catalysed reaction is alpha-D-glucosamine 1-phosphate = D-glucosamine 6-phosphate. Catalyzes the conversion of glucosamine-6-phosphate to glucosamine-1-phosphate. In Rhizobium meliloti (strain 1021) (Ensifer meliloti), this protein is Phosphoglucosamine mutase.